The following is a 234-amino-acid chain: Leucyl/phenylalanyl-tRNA--protein transferase (234 aa).

The protein belongs to the L/F-transferase family.

It localises to the cytoplasm. The enzyme catalyses N-terminal L-lysyl-[protein] + L-leucyl-tRNA(Leu) = N-terminal L-leucyl-L-lysyl-[protein] + tRNA(Leu) + H(+). The catalysed reaction is N-terminal L-arginyl-[protein] + L-leucyl-tRNA(Leu) = N-terminal L-leucyl-L-arginyl-[protein] + tRNA(Leu) + H(+). It catalyses the reaction L-phenylalanyl-tRNA(Phe) + an N-terminal L-alpha-aminoacyl-[protein] = an N-terminal L-phenylalanyl-L-alpha-aminoacyl-[protein] + tRNA(Phe). Functionally, functions in the N-end rule pathway of protein degradation where it conjugates Leu, Phe and, less efficiently, Met from aminoacyl-tRNAs to the N-termini of proteins containing an N-terminal arginine or lysine. The chain is Leucyl/phenylalanyl-tRNA--protein transferase from Escherichia coli O45:K1 (strain S88 / ExPEC).